We begin with the raw amino-acid sequence, 280 residues long: Nitrogenase iron protein (280 aa).

Residue 8 to 15 participates in ATP binding; the sequence is GKGGIGKS. Cysteine 95 provides a ligand contact to [4Fe-4S] cluster. Arginine 98 is modified (ADP-ribosylarginine; by dinitrogenase reductase ADP-ribosyltransferase). A [4Fe-4S] cluster-binding site is contributed by cysteine 128.

The protein belongs to the NifH/BchL/ChlL family. As to quaternary structure, homodimer. [4Fe-4S] cluster is required as a cofactor. The reversible ADP-ribosylation of Arg-98 inactivates the nitrogenase reductase and regulates nitrogenase activity.

It catalyses the reaction N2 + 8 reduced [2Fe-2S]-[ferredoxin] + 16 ATP + 16 H2O = H2 + 8 oxidized [2Fe-2S]-[ferredoxin] + 2 NH4(+) + 16 ADP + 16 phosphate + 6 H(+). Functionally, the key enzymatic reactions in nitrogen fixation are catalyzed by the nitrogenase complex, which has 2 components: the iron protein and the molybdenum-iron protein. This Methanospirillum hungatei JF-1 (strain ATCC 27890 / DSM 864 / NBRC 100397 / JF-1) protein is Nitrogenase iron protein.